Here is a 327-residue protein sequence, read N- to C-terminus: MHPQQLVVSWFSLVLLTSPIVAIWELEKNVYVVELDWYPDAPGETVVLRCDTPEEDGITWTSDQSSEVLGSGKTLTVQVKEFGDAGQYTCHKGGEVLSRSLLLLHKKEDGIWSTDILKDQKEPKAKSFLKCEAKDYSGHFTCWWLTAISTDLKFSVKSSRGSSDPRGVTCGAASLSTEKVIVDHREYKKYTVECQEGSACPAAEESLPIEVVVEAVHKLKYENYTSSFFIRDIIKPDPPKNLQLRPLKNSRQVEVSWEYPDTWSTPHSYFSLTFCVQVQGKNKREKKLFMDQTSAKVTCHKDASIRVQARDRYYNSFWSEWASVSCS.

The signal sequence occupies residues 1–22; that stretch reads MHPQQLVVSWFSLVLLTSPIVA. The Ig-like C2-type domain occupies 23–106; it reads IWELEKNVYV…LSRSLLLLHK (84 aa). A disulfide bridge links C50 with C90. N223 is a glycosylation site (N-linked (GlcNAc...) asparagine). The region spanning 238-327 is the Fibronectin type-III domain; the sequence is PPKNLQLRPL…WSEWASVSCS (90 aa).

This sequence belongs to the IL-12B family. In terms of assembly, heterodimer with IL12A; disulfide-linked. The heterodimer is known as interleukin IL-12. Heterodimer with IL23A; disulfide-linked. The heterodimer is known as interleukin IL-23. Also secreted as a monomer. Interacts with NBR1; this interaction promotes IL-12 secretion.

Its subcellular location is the secreted. In terms of biological role, cytokine that can act as a growth factor for activated T and NK cells, enhance the lytic activity of NK/lymphokine-activated killer cells, and stimulate the production of IFN-gamma by resting PBMC. Functionally, associates with IL23A to form the IL-23 interleukin, a heterodimeric cytokine which functions in innate and adaptive immunity. IL-23 may constitute with IL-17 an acute response to infection in peripheral tissues. IL-23 binds to a heterodimeric receptor complex composed of IL12RB1 and IL23R, activates the Jak-Stat signaling cascade, stimulates memory rather than naive T-cells and promotes production of pro-inflammatory cytokines. IL-23 induces autoimmune inflammation and thus may be responsible for autoimmune inflammatory diseases and may be important for tumorigenesis. The polypeptide is Interleukin-12 subunit beta (IL12B) (Cervus elaphus (Red deer)).